The following is a 410-amino-acid chain: MTQTHPIHVFSEIGKLKKVMLHRPGKEIENLMPDYLERLLFDDIPFLEDAQKEHDAFAQALRNEGVEVLYLENLAAESLTNQEIREQFIDEYIGEANVRGRATKKAIRELLLNIKDNKELIEKTMAGIQKSELPEIPSSEKGLTDLVESNYPFAIDPMPNLYFTRDPFATIGNGVSLNHMFSETRNRETLYGKYIFTHHPEYGGKVPMVYEREETTRIEGGDELVLSKDVLAVGISQRTDAASIEKLLVNIFKQNLGFKKVLAFEFANNRKFMHLDTVFTMVDYDKFTIHPEIEGDLRVYSVTYENQDLHIEEEKGDLADLLAKNLGVEKVELIRCGGDNLVAAGREQWNDGSNTLTIAPGVVIVYNRNTITNAILESKGLKLIKINGSELVRGRGGPRCMSMPFEREDL.

Cys-400 acts as the Amidino-cysteine intermediate in catalysis.

Belongs to the arginine deiminase family.

Its subcellular location is the cytoplasm. The enzyme catalyses L-arginine + H2O = L-citrulline + NH4(+). It functions in the pathway amino-acid degradation; L-arginine degradation via ADI pathway; carbamoyl phosphate from L-arginine: step 1/2. The protein is Arginine deiminase of Streptococcus agalactiae serotype III (strain NEM316).